The primary structure comprises 465 residues: Serine/threonine-protein kinase 38 (465 aa).

Position 2 is an N-acetylalanine (A2). An interaction with S100B region spans residues 62 to 87 (KRLRRSAHARKETEFLRLKRTRLGLE). T74 is modified (phosphothreonine). A Protein kinase domain is found at 89 to 382 (FESLKVIGRG…VEEIKNNSFF (294 aa)). ATP is bound by residues 95-103 (IGRGAFGEV) and K118. The active-site Proton acceptor is D212. The residue at position 264 (S264) is a Phosphoserine. A Phosphoserine; by autocatalysis modification is found at S281. The UFM1-interacting motif (UFIM) motif lies at 306–311 (WSLGVI). Residues 383 to 455 (EGVDWEHIRE…KRFEGLTARG (73 aa)) form the AGC-kinase C-terminal domain. T444 carries the post-translational modification Phosphothreonine; by STK24/MST3.

This sequence belongs to the protein kinase superfamily. AGC Ser/Thr protein kinase family. As to quaternary structure, homodimeric S100B binds two molecules of STK38. Interacts with MOB1 and MOB2. Interacts with MAP3K1 and MAP3K2 (via the kinase domain). Forms a tripartite complex with MOBKL1B and STK3/MST2. Interacts with MICAL1; leading to inhibit the protein kinase activity by antagonizing activation by MST1/STK4. The cofactor is Mg(2+). In terms of processing, ISGylated. Phosphorylated by STK3/MST2 and this is enhanced by MOBKL1B.

The protein localises to the nucleus. The protein resides in the cytoplasm. It localises to the chromosome. The enzyme catalyses L-seryl-[protein] + ATP = O-phospho-L-seryl-[protein] + ADP + H(+). It catalyses the reaction L-threonyl-[protein] + ATP = O-phospho-L-threonyl-[protein] + ADP + H(+). With respect to regulation, activated by binding of S100B which releases autoinhibitory N-lobe interactions, enabling ATP to bind and the autophosphorylation of Ser-281. Thr-444 then undergoes calcium-dependent phosphorylation by STK24/MST3. Interactions between phosphorylated Thr-444 and the N-lobe promote additional structural changes that complete the activation of the kinase. Autoinhibition is also released by the binding of MOB1/MOBKL1A and MOB2/HCCA2 to the N-terminal of STK38. Serine/threonine-protein kinase that acts as a negative regulator of MAP3K1/2 signaling. Converts MAP3K2 from its phosphorylated form to its non-phosphorylated form and inhibits autophosphorylation of MAP3K2. Acts as an ufmylation 'reader' in a kinase-independent manner: specifically recognizes and binds mono-ufmylated histone H4 in response to DNA damage, promoting the recruitment of SUV39H1 to the double-strand breaks, resulting in ATM activation. This Bos taurus (Bovine) protein is Serine/threonine-protein kinase 38 (STK38).